Here is a 487-residue protein sequence, read N- to C-terminus: Glutamyl-tRNA(Gln) amidotransferase subunit A (487 aa).

Residues Lys78 and Ser153 each act as charge relay system in the active site. Residue Ser177 is the Acyl-ester intermediate of the active site.

This sequence belongs to the amidase family. GatA subfamily. In terms of assembly, heterotrimer of A, B and C subunits.

It carries out the reaction L-glutamyl-tRNA(Gln) + L-glutamine + ATP + H2O = L-glutaminyl-tRNA(Gln) + L-glutamate + ADP + phosphate + H(+). Functionally, allows the formation of correctly charged Gln-tRNA(Gln) through the transamidation of misacylated Glu-tRNA(Gln) in organisms which lack glutaminyl-tRNA synthetase. The reaction takes place in the presence of glutamine and ATP through an activated gamma-phospho-Glu-tRNA(Gln). The protein is Glutamyl-tRNA(Gln) amidotransferase subunit A of Oenococcus oeni (strain ATCC BAA-331 / PSU-1).